We begin with the raw amino-acid sequence, 257 residues long: Phosphonates import ATP-binding protein PhnC 1 (257 aa).

Residues 2-246 (LKITNLTKRY…EMDTIYAGVP (245 aa)) enclose the ABC transporter domain. 35–42 (GSSGAGKS) provides a ligand contact to ATP.

This sequence belongs to the ABC transporter superfamily. Phosphonates importer (TC 3.A.1.9.1) family. The complex is composed of two ATP-binding proteins (PhnC), two transmembrane proteins (PhnE) and a solute-binding protein (PhnD).

The protein resides in the cell inner membrane. The catalysed reaction is phosphonate(out) + ATP + H2O = phosphonate(in) + ADP + phosphate + H(+). Functionally, part of the ABC transporter complex PhnCDE involved in phosphonates import. Responsible for energy coupling to the transport system. This chain is Phosphonates import ATP-binding protein PhnC 1, found in Ruegeria sp. (strain TM1040) (Silicibacter sp.).